We begin with the raw amino-acid sequence, 350 residues long: Cell division protein ZipA (350 aa).

The Periplasmic portion of the chain corresponds to 1-6; it reads MEDLQL. The chain crosses the membrane as a helical span at residues 7–27; that stretch reads VLFVLGAIAIVAVLVHGFWSI. Over 28 to 350 the chain is Cytoplasmic; the sequence is RKQQPRTIKE…QYLARIRANA (323 aa). Disordered stretches follow at residues 36 to 55, 65 to 136, and 187 to 213; these read KEQP…AEGF, VRKL…PSAR, and RVPA…EEPL. Composition is skewed to basic and acidic residues over residues 65–109 and 116–131; these read VRKL…ESRA and AAHE…HEEP.

It belongs to the ZipA family. In terms of assembly, interacts with FtsZ via their C-terminal domains.

The protein resides in the cell inner membrane. Its function is as follows. Essential cell division protein that stabilizes the FtsZ protofilaments by cross-linking them and that serves as a cytoplasmic membrane anchor for the Z ring. Also required for the recruitment to the septal ring of downstream cell division proteins. The protein is Cell division protein ZipA of Shewanella amazonensis (strain ATCC BAA-1098 / SB2B).